A 183-amino-acid polypeptide reads, in one-letter code: MAEAEHTASTPGGESSRRDFLIYGTTAVGAVGVALAVWPFIDFMNPAADTLALASTEVDVSAIAEGQAITVTWRGKPVFVRHRTQKEIVVARAVDPASLRDPQTDEARVQQAQWLVMVGVCTHLGCIPLGQKAGDPKGDFDGWFCPCHGSHYDSAGRIRKGPAPLNLPVPPYAFTDDTTVLIG.

A helical membrane pass occupies residues 21 to 41 (LIYGTTAVGAVGVALAVWPFI). The region spanning 88-181 (IVVARAVDPA…YAFTDDTTVL (94 aa)) is the Rieske domain. The [2Fe-2S] cluster site is built by Cys121, His123, Cys145, and His148. An intrachain disulfide couples Cys126 to Cys147.

This sequence belongs to the Rieske iron-sulfur protein family. As to quaternary structure, the main subunits of complex b-c1 are: cytochrome b, cytochrome c1 and the Rieske protein. Requires [2Fe-2S] cluster as cofactor.

Its subcellular location is the cell inner membrane. The enzyme catalyses a quinol + 2 Fe(III)-[cytochrome c](out) = a quinone + 2 Fe(II)-[cytochrome c](out) + 2 H(+)(out). Functionally, component of the ubiquinol-cytochrome c reductase complex (complex III or cytochrome b-c1 complex), which is a respiratory chain that generates an electrochemical potential coupled to ATP synthesis. The protein is Ubiquinol-cytochrome c reductase iron-sulfur subunit (petA) of Rhodospirillum rubrum.